The following is a 398-amino-acid chain: Metal tolerance protein 1 (398 aa).

Residues 1-56 (MESSSPHHSHIVEVNVGKSDEERIIVASKVCGEAPCGFSDSKNASGDAHERSASMR) are Cytoplasmic-facing. Residues 57 to 77 (KLCIAVVLCLVFMSVEVVGGI) form a helical membrane-spanning segment. Residues 78 to 89 (KANSLAILTDAA) lie on the Vacuolar side of the membrane. Residues 90–110 (HLLSDVAAFAISLFSLWAAGW) form a helical membrane-spanning segment. At 111–122 (EATPRQTYGFFR) the chain is on the cytoplasmic side. Residues 123-143 (IEILGALVSIQLIWLLTGILV) traverse the membrane as a helical segment. The Vacuolar portion of the chain corresponds to 144–159 (YEAIIRIVTETSEVNG). A helical transmembrane segment spans residues 160 to 180 (FLMFLVAAFGLVVNIIMAVLL). At 181–263 (GHDHGHSHGH…KRNINLQGAY (83 aa)) the chain is on the cytoplasmic side. Residues 182 to 232 (HDHGHSHGHGHGHGHDHHNHSHGVTVTTHHHHHDHEHGHSHGHGEDKHHAH) form a required for zinc-binding region. The interval 186–232 (HSHGHGHGHGHDHHNHSHGVTVTTHHHHHDHEHGHSHGHGEDKHHAH) is disordered. Basic residues predominate over residues 187-202 (SHGHGHGHGHDHHNHS). Over residues 216–232 (HEHGHSHGHGEDKHHAH) the composition is skewed to basic and acidic residues. Residues 264–284 (LHVLGDSIQSVGVMIGGAIIW) form a helical membrane-spanning segment. Residues 285–290 (YNPEWK) lie on the Vacuolar side of the membrane. Residues 291–311 (IVDLICTLAFSVIVLGTTINM) form a helical membrane-spanning segment. The Cytoplasmic portion of the chain corresponds to 312–398 (IRNILEVLME…ISHVTIQIER (87 aa)).

It belongs to the cation diffusion facilitator (CDF) transporter (TC 2.A.4) family. SLC30A subfamily. Ubiquitously expressed at low levels.

It is found in the vacuole membrane. In terms of biological role, mediates zinc accumulation in roots and confers resistance to zinc. Involved in sequestration of excess zinc in the cytoplasm into vacuoles to maintain zinc homeostasis. Can also transport cadmium with a low efficiency. This is Metal tolerance protein 1 from Arabidopsis thaliana (Mouse-ear cress).